Consider the following 129-residue polypeptide: Small ribosomal subunit protein uS11 (129 aa).

Belongs to the universal ribosomal protein uS11 family. Part of the 30S ribosomal subunit. Interacts with proteins S7 and S18. Binds to IF-3.

In terms of biological role, located on the platform of the 30S subunit, it bridges several disparate RNA helices of the 16S rRNA. Forms part of the Shine-Dalgarno cleft in the 70S ribosome. In Methylobacterium sp. (strain 4-46), this protein is Small ribosomal subunit protein uS11.